Reading from the N-terminus, the 280-residue chain is Shikimate kinase (280 aa).

74–84 (PGGSGLGSSSA) contributes to the ATP binding site.

It belongs to the GHMP kinase family. Archaeal shikimate kinase subfamily.

Its subcellular location is the cytoplasm. The catalysed reaction is shikimate + ATP = 3-phosphoshikimate + ADP + H(+). It participates in metabolic intermediate biosynthesis; chorismate biosynthesis; chorismate from D-erythrose 4-phosphate and phosphoenolpyruvate: step 5/7. This chain is Shikimate kinase (aroK), found in Archaeoglobus fulgidus (strain ATCC 49558 / DSM 4304 / JCM 9628 / NBRC 100126 / VC-16).